We begin with the raw amino-acid sequence, 166 residues long: UPF0304 protein VP0990 (166 aa).

The protein belongs to the UPF0304 family.

The polypeptide is UPF0304 protein VP0990 (Vibrio parahaemolyticus serotype O3:K6 (strain RIMD 2210633)).